The sequence spans 342 residues: Cell cycle control protein 50C (342 aa).

The Cytoplasmic portion of the chain corresponds to 1–33 (MEMMPQYDLSRLPENTALKQQTLPTQQLNLSAS). Residues 34–54 (VVLSIFFITGGFCLSIGIILL) form a helical membrane-spanning segment. Over 55 to 306 (LSAKSTKKIE…STLTWIGGGG (252 aa)) the chain is Extracellular. N-linked (GlcNAc...) asparagine glycosylation is found at N66, N80, N89, and N205. Residues 307–327 (LFLGLTYTVTGALTLLASFAI) form a helical membrane-spanning segment. At 328–342 (LTIHLMLKRSKLNFL) the chain is on the cytoplasmic side.

It belongs to the CDC50/LEM3 family. Specifically expressed in testis.

It is found in the membrane. This chain is Cell cycle control protein 50C (Tmem30c), found in Mus musculus (Mouse).